We begin with the raw amino-acid sequence, 525 residues long: Beta-galactoside alpha-2,6-sialyltransferase 2 (525 aa).

Topologically, residues 1–11 (MKPHLKQWRQR) are cytoplasmic. A helical; Signal-anchor for type II membrane protein transmembrane segment spans residues 12-32 (MLFAIFVWGLLFLAIFIYFTN). Topologically, residues 33–525 (SNPAAPMPSS…PVTRPNNTNT (493 aa)) are lumenal. 2 disordered regions span residues 85–107 (SASP…DGFD) and 145–183 (RQGA…PEEA). Disulfide bonds link Cys-249–Cys-515, Cys-292–Cys-444, and Cys-462–Cys-473. Asn-303 and Asn-333 each carry an N-linked (GlcNAc...) asparagine glycan. Asn-521 carries N-linked (GlcNAc...) asparagine glycosylation.

It belongs to the glycosyltransferase 29 family.

It is found in the golgi apparatus. Its subcellular location is the golgi stack membrane. The catalysed reaction is a beta-D-galactoside + CMP-N-acetyl-beta-neuraminate = an N-acetyl-alpha-neuraminyl-(2-&gt;6)-beta-D-galactosyl derivative + CMP + H(+). Transfers sialic acid from the donor of substrate CMP-sialic acid to galactose containing acceptor substrates. Has alpha-2,6-sialyltransferase activity toward oligosaccharides that have the Gal-beta-1,4-GlcNAc sequence at the non-reducing end of their carbohydrate groups, but it has weak or no activities toward glycoproteins and glycolipids. The chain is Beta-galactoside alpha-2,6-sialyltransferase 2 (St6gal2) from Rattus norvegicus (Rat).